Reading from the N-terminus, the 486-residue chain is Transcription factor aptf-4 (486 aa).

Disordered regions lie at residues 25-49 (CEPS…SAKM) and 150-173 (LSTT…NQEK). Over residues 150–169 (LSTTSANFTPDWNTTTNGPC) the composition is skewed to polar residues. Residues 301–430 (QRQRKVTCFS…IVEQAALYCE (130 aa)) are H-S-H (helix-span-helix), dimerization.

It belongs to the AP-2 family. In terms of assembly, binds DNA as a dimer.

Its subcellular location is the nucleus. Sequence-specific DNA-binding protein that interacts with enhancer elements to regulate transcription of selected genes. Required for neuroblast and epidermal morphogenesis, perhaps acting in cooperation with transcription factor aptf-2. This Caenorhabditis elegans protein is Transcription factor aptf-4.